The chain runs to 341 residues: Thymidine kinase (341 aa).

Position 19 to 26 (19 to 26) interacts with ATP; sequence GAYGIGKT. The Proton acceptor role is filled by glutamate 48. Tyrosine 66 and glutamine 90 together coordinate substrate. Arginine 183 lines the ATP pocket. Position 189 (arginine 189) interacts with substrate.

The protein belongs to the herpesviridae thymidine kinase family. Homodimer.

The catalysed reaction is thymidine + ATP = dTMP + ADP + H(+). Functionally, catalyzes the transfer of the gamma-phospho group of ATP to thymidine to generate dTMP in the salvage pathway of pyrimidine synthesis. The dTMP serves as a substrate for DNA polymerase during viral DNA replication. Allows the virus to be reactivated and to grow in non-proliferative cells lacking a high concentration of phosphorylated nucleic acid precursors. The polypeptide is Thymidine kinase (Varicella-zoster virus (strain Oka vaccine) (HHV-3)).